Reading from the N-terminus, the 201-residue chain is Probable GTP-binding protein EngB (201 aa).

In terms of domain architecture, EngB-type G spans 22 to 195 (SLPEIAFCGR…MEQLEMILKY (174 aa)). GTP is bound by residues 30–37 (GRSNVGKS), 57–61 (GKTRT), 75–78 (DLPG), 142–145 (TKLD), and 174–176 (YSS). Ser-37 and Thr-59 together coordinate Mg(2+).

Belongs to the TRAFAC class TrmE-Era-EngA-EngB-Septin-like GTPase superfamily. EngB GTPase family. It depends on Mg(2+) as a cofactor.

Functionally, necessary for normal cell division and for the maintenance of normal septation. The sequence is that of Probable GTP-binding protein EngB from Finegoldia magna (strain ATCC 29328 / DSM 20472 / WAL 2508) (Peptostreptococcus magnus).